A 97-amino-acid chain; its full sequence is HssA/B-like protein 48 (97 aa).

Disordered stretches follow at residues 1-20 (MTLF…SKSS) and 78-97 (GSGY…CCGI).

This sequence belongs to the hssA/B family.

This is HssA/B-like protein 48 (hssl48) from Dictyostelium discoideum (Social amoeba).